The chain runs to 541 residues: Protein wntless homolog (541 aa).

Topologically, residues 1 to 15 (MAGAIIENMSTKKLC) are cytoplasmic. A helical membrane pass occupies residues 16–36 (IVGGILLVFQIVAFLVGGLIA). Over 37-232 (PAPTTAVSYV…GIHQNGGFTK (196 aa)) the chain is Lumenal. The segment at 101–202 (MEMSPWFQFM…KYYLLNIRLP (102 aa)) is interaction with Wnt proteins. The helical transmembrane segment at 233–253 (VWFAMKTFLTPSIFIIMVWYW) threads the bilayer. At 254 to 268 (RRITMMSRPPVLLEK) the chain is on the cytoplasmic side. Residues 269 to 289 (VIFALGISMTFINIPVEWFSI) traverse the membrane as a helical segment. The Lumenal portion of the chain corresponds to 290-303 (GFDWTWMLLFGDIR). A helical transmembrane segment spans residues 304-324 (QGIFYAMLLSFWIIFCGEHMM). Residues 325 to 331 (DQHERNH) lie on the Cytoplasmic side of the membrane. A helical transmembrane segment spans residues 332 to 352 (IAGYWKQVGPIAVGSFCLFIF). Topologically, residues 353 to 380 (DMCERGVQLTNPFYSIWTTDVGTELAMA) are lumenal. A helical membrane pass occupies residues 381 to 401 (FIIVAGICLCLYFLFLCFMVF). At 402-431 (QVFRNISGKQSSLPAMSKVRRLHYEGLIFR) the chain is on the cytoplasmic side. A helical membrane pass occupies residues 432–452 (FKFLMLITLACAAMTVIFFIV). Residues 453 to 471 (SQVTEGHWKWGGVTVQVSS) lie on the Lumenal side of the membrane. Residues 472–492 (AFFTGIYGMWNLYVFALMFLY) form a helical membrane-spanning segment. At 493–541 (APSHKNYGEDQSNGDLGVHSGEELQLTTTITHVDGPTEIYKLTRKEAQE) the chain is on the cytoplasmic side.

It belongs to the wntless family. In terms of assembly, interacts with WNT3A. Interacts with WNT1, WNT3 and WNT5A. In terms of processing, N-glycosylated. Expressed in the brain, skeletal muscle, heart muscle, lung, gut, liver, and kidney (at protein level). In the brain, expressed in the cortex, striatum, ventral tegmentum, nucleus accumbens and to a lesser extent in the Purkinjie cells in the cerebellum. Expressed in eye iridocorneal angle.

It is found in the golgi apparatus membrane. The protein localises to the cytoplasmic vesicle membrane. The protein resides in the cell membrane. Its subcellular location is the endoplasmic reticulum membrane. It localises to the early endosome membrane. Its function is as follows. Regulates Wnt proteins sorting and secretion in a feedback regulatory mechanism. This reciprocal interaction plays a key role in the regulation of expression, subcellular location, binding and organelle-specific association of Wnt proteins. Also plays an important role in establishment of the anterior-posterior body axis formation during development. In Rattus norvegicus (Rat), this protein is Protein wntless homolog (Wls).